A 384-amino-acid polypeptide reads, in one-letter code: Guanine nucleotide-binding protein alpha-1 subunit (384 aa).

A lipid anchor (N-myristoyl glycine) is attached at Gly2. The S-palmitoyl cysteine moiety is linked to residue Cys5. The 347-residue stretch at 38-384 (HIQKLLLLGA…RRNLFEAGLL (347 aa)) folds into the G-alpha domain. The interval 41–54 (KLLLLGAGESGKST) is G1 motif. 14 residues coordinate GTP: Glu49, Ser50, Gly51, Lys52, Ser53, Thr54, Leu188, Tyr189, Thr194, Gly222, Asn288, Lys289, Asp291, and Ala356. Ser53 is a binding site for Mg(2+). A G2 motif region spans residues 186–194 (DVLYARVRT). Residue Thr194 participates in Mg(2+) binding. The G3 motif stretch occupies residues 215-224 (YRLFDVGGQR). The interval 284 to 291 (MLFLNKFD) is G4 motif. The tract at residues 354–359 (TTALDQ) is G5 motif.

Belongs to the G-alpha family. In terms of assembly, g proteins are composed of 3 units; alpha, beta and gamma. The alpha chain contains the guanine nucleotide binding site. Requires Mg(2+) as cofactor.

Functionally, guanine nucleotide-binding proteins (G proteins) are involved as modulators or transducers in various transmembrane signaling systems. This Lupinus luteus (European yellow lupine) protein is Guanine nucleotide-binding protein alpha-1 subunit (GPA1).